We begin with the raw amino-acid sequence, 382 residues long: Sphingoid long-chain base transporter RSB1 (382 aa).

Residues 1–34 (MSNATNNTLGSLLPQLEAAANSNSLYGGMVPNLR) are Extracellular-facing. Residues N3 and N6 are each glycosylated (N-linked (GlcNAc...) asparagine). The helical transmembrane segment at 35-55 (FNITMIVIWGILLTIHVVQLL) threads the bilayer. The Cytoplasmic portion of the chain corresponds to 56–57 (MR). Residues 58–78 (QYWFSIAFICTGILEVLGFIG) form a helical membrane-spanning segment. The Extracellular portion of the chain corresponds to 79–90 (RTWSHSNVADMD). Residues 91 to 111 (AFLLNMICLTIAPVFTMGGIY) traverse the membrane as a helical segment. Residues 112–135 (YQLAKLIEVYGHRFSLLPSPMAYS) lie on the Cytoplasmic side of the membrane. The chain crosses the membrane as a helical span at residues 136–156 (FIFICSDIVSLVVQAVGGGLC). Residues 157–171 (GVAVTDGTSTTTGNH) are Extracellular-facing. Residues 172-192 (VFIAGLAIQVASMAIFLMLWF) form a helical membrane-spanning segment. The Cytoplasmic portion of the chain corresponds to 193 to 241 (HFLFRIYISVRWEHINSRPISLSLLKISQTEVDYLYREKFHFLRLEPKR). The chain crosses the membrane as a helical span at residues 242–262 (WVFHYFNLAITVAVLTIFTRC). Residues 263-281 (CYRLAELVVGWDGYLITHE) lie on the Extracellular side of the membrane. A helical transmembrane segment spans residues 282-302 (WYFIILDALMMAIATVTLTIF). The Cytoplasmic portion of the chain corresponds to 303–382 (HPGFAFKGKS…LFSSKKKAKL (80 aa)).

This sequence belongs to the lipid-translocating exporter (LTE) (TC 9.A.26.1) family.

Its subcellular location is the cell membrane. Functionally, catalyzes the ATP-dependent translocation of sphingoid long-chain bases (LCBs) from the cytoplasmic site toward the extracytoplasmic side of the membrane (flip-flop). Involved in the establishment of the functional lipid asymmetry of the plasma membrane. Regulates intracellular levels of LCBs, sphingolipid precursors that are growth inhibitory at increased levels. This Saccharomyces cerevisiae (strain JAY291) (Baker's yeast) protein is Sphingoid long-chain base transporter RSB1 (RSB1).